The primary structure comprises 156 residues: MPRRRVAAKREILPDPKFGSKKLAKFINHVMESGKKSVAERIVYGALDIVSNKAKKEPIETFELALENIQPLVEVKSRRVGGATYQVPVEVRPSRQMALSMRWLVEYSRKRGEKSMAARLAAEMLEAAEGRGAAVKKREDVHRMAEANKAFSHYRF.

Belongs to the universal ribosomal protein uS7 family. As to quaternary structure, part of the 30S ribosomal subunit. Contacts proteins S9 and S11.

In terms of biological role, one of the primary rRNA binding proteins, it binds directly to 16S rRNA where it nucleates assembly of the head domain of the 30S subunit. Is located at the subunit interface close to the decoding center, probably blocks exit of the E-site tRNA. The polypeptide is Small ribosomal subunit protein uS7 (Hahella chejuensis (strain KCTC 2396)).